A 324-amino-acid polypeptide reads, in one-letter code: O-ureido-L-serine synthase (324 aa).

The residue at position 43 (Lys43) is an N6-(pyridoxal phosphate)lysine. Pyridoxal 5'-phosphate-binding positions include Asn73, 177 to 181 (GTTGT), and Ser265.

Belongs to the cysteine synthase/cystathionine beta-synthase family. Homotetramer. The cofactor is pyridoxal 5'-phosphate.

The enzyme catalyses hydroxyurea + O-acetyl-L-serine = O-ureido-L-serine + acetate + H(+). The catalysed reaction is O-acetyl-L-serine + hydrogen sulfide = L-cysteine + acetate. Functionally, involved in the biosynthesis of the antibiotic D-cycloserine (DCS), a cyclic structural analog of D-alanine, used as an antitubercular agent. Catalyzes the addition of hydroxyurea on O-acetyl-L-serine (OAS) to yield O-ureido-L-serine. It prefers sulfide as the second substrate, followed by hydroxyurea, L-homocysteine, and thiosulfate. The protein is O-ureido-L-serine synthase of Streptomyces lavendulae.